We begin with the raw amino-acid sequence, 915 residues long: DNA repair-scaffolding protein (915 aa).

A compositionally biased stretch (basic residues) spans methionine 1–serine 15. 2 disordered regions span residues methionine 1–glutamine 30 and phenylalanine 56–threonine 114. Over residues phenylalanine 56 to leucine 65 the composition is skewed to polar residues. Positions alanine 67 to glutamine 85 are enriched in basic and acidic residues. A compositionally biased stretch (polar residues) spans glutamate 86–aspartate 107. Residues glutamate 151 to glutamate 450 form a necessary for interaction with RAD51 region.

Found in a complex, at least composed of BLM, RAD51 and SPIDR; the complex formation is mediated by SPIDR. Interacts (via C-terminal region) with BLM; the interaction is direct. Interacts with RAD51; the interaction is direct. Interacts (via the C-terminal region) with FIGNL1 (via N-terminal one-half region); the interaction is direct.

It is found in the nucleus. Its function is as follows. Plays a role in DNA double-strand break (DBS) repair via homologous recombination (HR). Serves as a scaffolding protein that helps to promote the recruitment of DNA-processing enzymes like the helicase BLM and recombinase RAD51 to site of DNA damage, and hence contributes to maintain genomic integrity. The polypeptide is DNA repair-scaffolding protein (SPIDR) (Homo sapiens (Human)).